The following is a 223-amino-acid chain: Golgi SNAP receptor complex member 1 (223 aa).

The residue at position 2 (Ser-2) is an N-acetylserine. The Cytoplasmic portion of the chain corresponds to 2–204; the sequence is SSQPSFVTIR…MKINTRRKKN (203 aa). Ser-164 bears the Phosphoserine mark. A helical; Anchor for type IV membrane protein membrane pass occupies residues 205–222; sequence AFVLATITTLCILFLFFT. Trp-223 is a topological domain (vesicular).

It belongs to the GOSR1 family. In terms of assembly, component of several multiprotein Golgi SNARE complexes. Identified in a Golgi SNARE complex consisting of t-SNARES SED5, YKT6, and the v-SNARE SFT1. Interacts with BET1. Interacts with BOS1. Interacts with SEC22. Interacts with PEP12. Interacts with self.

It localises to the golgi apparatus membrane. Its function is as follows. Involved in transport from the ER to the Golgi apparatus as well as in intra-Golgi transport. It belongs to a super-family of proteins called t-SNAREs or soluble NSF (N-ethylmaleimide-sensitive factor) attachment protein receptor. Rescues alpha-factor maturation defects. The polypeptide is Golgi SNAP receptor complex member 1 (GOS1) (Saccharomyces cerevisiae (strain ATCC 204508 / S288c) (Baker's yeast)).